The following is a 347-amino-acid chain: Anthranilate phosphoribosyltransferase (347 aa).

5-phospho-alpha-D-ribose 1-diphosphate is bound by residues Gly-88, 91 to 92 (GD), Thr-96, 98 to 101 (NIST), 116 to 124 (KHGNRSVSS), and Ser-128. Gly-88 lines the anthranilate pocket. Ser-100 contributes to the Mg(2+) binding site. An anthranilate-binding site is contributed by Asn-119. Arg-174 serves as a coordination point for anthranilate. Positions 232 and 233 each coordinate Mg(2+).

Belongs to the anthranilate phosphoribosyltransferase family. Homodimer. It depends on Mg(2+) as a cofactor.

The enzyme catalyses N-(5-phospho-beta-D-ribosyl)anthranilate + diphosphate = 5-phospho-alpha-D-ribose 1-diphosphate + anthranilate. It functions in the pathway amino-acid biosynthesis; L-tryptophan biosynthesis; L-tryptophan from chorismate: step 2/5. Functionally, catalyzes the transfer of the phosphoribosyl group of 5-phosphorylribose-1-pyrophosphate (PRPP) to anthranilate to yield N-(5'-phosphoribosyl)-anthranilate (PRA). The polypeptide is Anthranilate phosphoribosyltransferase (Shewanella sp. (strain ANA-3)).